The primary structure comprises 518 residues: Prosaposin (518 aa).

An N-terminal signal peptide occupies residues 1 to 17 (MARRLLTLLGLLAAAVA). A propeptide spanning residues 18-60 (SPVLWQKDCAKGPEVWCQSLRTASQCGAVKHCQQNVWSKPAVN) is cleaved from the precursor. In terms of domain architecture, Saposin A-type 1 spans 19–59 (PVLWQKDCAKGPEVWCQSLRTASQCGAVKHCQQNVWSKPAV). Saposin B-type domains are found at residues 60–143 (NSIP…QSLQ), 193–277 (TEDV…PSVK), 307–388 (TFSV…AANK), and 399–480 (AGGF…GAAK). 3 cysteine pairs are disulfide-bonded: Cys-64/Cys-139, Cys-67/Cys-133, and Cys-95/Cys-107. N-linked (GlcNAc...) asparagine glycosylation occurs at Asn-81. Positions 144–193 (KHLAAMKLQKQLQSNKIPELDFSELTSPFMANVPLLLYPQDKPKQKSKAT) are excised as a propeptide. Disulfide bonds link Cys-197-Cys-273, Cys-200-Cys-267, and Cys-229-Cys-240. Asn-214 is a glycosylation site (N-linked (GlcNAc...) asparagine). The propeptide occupies 277–306 (KSVPLQTLVPAQVVHEVKMETVEKATVQEK). 3 cysteine pairs are disulfide-bonded: Cys-311–Cys-384, Cys-314–Cys-378, and Cys-342–Cys-353. Asn-328 carries an N-linked (GlcNAc...) asparagine glycan. Positions 388-398 (KPPQQPVVVKP) are excised as a propeptide. Intrachain disulfides connect Cys-403–Cys-476, Cys-406–Cys-470, and Cys-434–Cys-445. Residue Asn-420 is glycosylated (N-linked (GlcNAc...) asparagine). A propeptide spanning residues 480–518 (KKPLLGEDACVWGPGYWCKNMETAAQCNAVDHCRRHVWN) is cleaved from the precursor. The Saposin A-type 2 domain occupies 482–518 (PLLGEDACVWGPGYWCKNMETAAQCNAVDHCRRHVWN).

In terms of assembly, saposin-B is a homodimer. In terms of processing, this precursor is proteolytically processed to 4 small peptides, which are similar to each other and are sphingolipid hydrolase activator proteins.

It localises to the lysosome. The protein localises to the secreted. Functionally, the lysosomal degradation of sphingolipids takes place by the sequential action of specific hydrolases. Some of these enzymes require specific low-molecular mass, non-enzymatic proteins: the sphingolipids activator proteins (coproteins). Its function is as follows. Saposin-A and saposin-C stimulate the hydrolysis of glucosylceramide by beta-glucosylceramidase (EC 3.2.1.45) and galactosylceramide by beta-galactosylceramidase (EC 3.2.1.46). Saposin-C apparently acts by combining with the enzyme and acidic lipid to form an activated complex, rather than by solubilizing the substrate. In terms of biological role, saposin-B stimulates the hydrolysis of galacto-cerebroside sulfate by arylsulfatase A (EC 3.1.6.8), GM1 gangliosides by beta-galactosidase (EC 3.2.1.23) and globotriaosylceramide by alpha-galactosidase A (EC 3.2.1.22). Saposin-B forms a solubilizing complex with the substrates of the sphingolipid hydrolases. Saposin-D is a specific sphingomyelin phosphodiesterase activator (EC 3.1.4.12). The chain is Prosaposin (PSAP) from Gallus gallus (Chicken).